The sequence spans 124 residues: Ribosome-binding factor A (124 aa).

It belongs to the RbfA family. As to quaternary structure, monomer. Binds 30S ribosomal subunits, but not 50S ribosomal subunits or 70S ribosomes.

Its subcellular location is the cytoplasm. Functionally, one of several proteins that assist in the late maturation steps of the functional core of the 30S ribosomal subunit. Associates with free 30S ribosomal subunits (but not with 30S subunits that are part of 70S ribosomes or polysomes). Required for efficient processing of 16S rRNA. May interact with the 5'-terminal helix region of 16S rRNA. The sequence is that of Ribosome-binding factor A from Thiobacillus denitrificans (strain ATCC 25259 / T1).